Here is a 222-residue protein sequence, read N- to C-terminus: dTTP/UTP pyrophosphatase (222 aa).

Residue Asp83 is the Proton acceptor of the active site.

The protein belongs to the Maf family. YhdE subfamily. A divalent metal cation serves as cofactor.

It is found in the cytoplasm. The catalysed reaction is dTTP + H2O = dTMP + diphosphate + H(+). The enzyme catalyses UTP + H2O = UMP + diphosphate + H(+). Nucleoside triphosphate pyrophosphatase that hydrolyzes dTTP and UTP. May have a dual role in cell division arrest and in preventing the incorporation of modified nucleotides into cellular nucleic acids. The polypeptide is dTTP/UTP pyrophosphatase (Desulfitobacterium hafniense (strain Y51)).